The chain runs to 335 residues: Methionine import ATP-binding protein MetN (335 aa).

The region spanning 2–241 is the ABC transporter domain; it reads IQFKDSYKHY…PQHPTTRSFV (240 aa). An ATP-binding site is contributed by 38 to 45; sequence GHSGAGKS.

This sequence belongs to the ABC transporter superfamily. Methionine importer (TC 3.A.1.24) family. In terms of assembly, the complex is composed of two ATP-binding proteins (MetN), two transmembrane proteins (MetI) and a solute-binding protein (MetQ).

It is found in the cell inner membrane. The catalysed reaction is L-methionine(out) + ATP + H2O = L-methionine(in) + ADP + phosphate + H(+). It carries out the reaction D-methionine(out) + ATP + H2O = D-methionine(in) + ADP + phosphate + H(+). Functionally, part of the ABC transporter complex MetNIQ involved in methionine import. Responsible for energy coupling to the transport system. This is Methionine import ATP-binding protein MetN from Xylella fastidiosa (strain Temecula1 / ATCC 700964).